A 442-amino-acid polypeptide reads, in one-letter code: MKIPSQRQLAIQYNVNRVTIIKSIELLEAEGFIYTKVGSGTYVNDYLNEAHITNKWSEMMLWSSRQRSQYTVQLINKIETDASYIHISKGELGQPLMPHIQLKKAMSNTASHIEDLSFGYNNGYGYIKLRDIIVERMSKQGINVGRENVMITSGALHAIQLLSIGFLGQDAIIISNTPSYIHSTNVFEQLNFRHIDAPYNQINEINTIIDRFINFKNKALYIEPRFNNPTGCSLTNEQKQNIITYSERHNIPIIEDDIFRDIFFSDPTPAIKTFDKLGKVIHISSFSKTIAPAIRIGWIVASEKIIEQLADVRMQIDYGSSILSQMVVYEMLKNKSYDKHLVKLRYVLKDKRDFMLNILNNLFKDIAHWEVSSGGYFVWLVFKIDIDIKYLFYELLSKEKILINPGYIYGSKEKSIRLSFAFESNENIKHALYKIYTYVKKV.

The region spanning 2–46 (KIPSQRQLAIQYNVNRVTIIKSIELLEAEGFIYTKVGSGTYVNDY) is the HTH gntR-type domain. Positions 6–25 (QRQLAIQYNVNRVTIIKSIE) form a DNA-binding region, H-T-H motif. Position 288 is an N6-(pyridoxal phosphate)lysine (K288).

This sequence in the C-terminal section; belongs to the class-I pyridoxal-phosphate-dependent aminotransferase family. Pyridoxal 5'-phosphate serves as cofactor.

In terms of biological role, positively regulates the expression of the NorB efflux pump and negatively regulates the expression of the AbcA efflux pump. Binds specifically to the promoters of norA, norB and norC and abcA genes. Could also have an aminotransferase activity. In Staphylococcus aureus (strain bovine RF122 / ET3-1), this protein is HTH-type transcriptional regulator NorG (norG).